A 365-amino-acid chain; its full sequence is DNA polymerase IV 1 (365 aa).

The 191-residue stretch at 6–196 (VLHIDMDYFF…LNVSKLWGIG (191 aa)) folds into the UmuC domain. Mg(2+) contacts are provided by Asp10 and Asp113. The active site involves Glu114.

It belongs to the DNA polymerase type-Y family. Monomer. Mg(2+) serves as cofactor.

The protein resides in the cytoplasm. It catalyses the reaction DNA(n) + a 2'-deoxyribonucleoside 5'-triphosphate = DNA(n+1) + diphosphate. In terms of biological role, poorly processive, error-prone DNA polymerase involved in untargeted mutagenesis. Copies undamaged DNA at stalled replication forks, which arise in vivo from mismatched or misaligned primer ends. These misaligned primers can be extended by PolIV. Exhibits no 3'-5' exonuclease (proofreading) activity. May be involved in translesional synthesis. The polypeptide is DNA polymerase IV 1 (dbh1) (Methanosarcina mazei (strain ATCC BAA-159 / DSM 3647 / Goe1 / Go1 / JCM 11833 / OCM 88) (Methanosarcina frisia)).